The sequence spans 1037 residues: PH and SEC7 domain-containing protein 3 (1037 aa).

Residues 37–70 (EEKTPDSSDHGGSTLLPPTVTNEFPEYGTMEEGG) form a disordered region. Serine 76 carries the phosphoserine modification. Disordered stretches follow at residues 169–189 (TASH…GKSP), 236–255 (RVPE…HNPV), 262–284 (REQR…SMGR), 304–335 (EAES…ACGV), and 353–375 (APSE…ESGE). The span at 237–251 (VPESACPVSSSSAGS) shows a compositional bias: low complexity. The span at 262-277 (REQRSDLGREHPRGYD) shows a compositional bias: basic and acidic residues. Residues 515–723 (NSVYTRGPQE…KALYNSIKNE (209 aa)) enclose the SEC7 domain. The span at 730–747 (DDEEKKKSPSEGTDEKAN) shows a compositional bias: basic and acidic residues. The interval 730–762 (DDEEKKKSPSEGTDEKANGTHPKTISRIGSTTN) is disordered. A compositionally biased stretch (polar residues) spans 750–762 (HPKTISRIGSTTN). The residue at position 759 (serine 759) is a Phosphoserine. Residues 774–887 (AVYKSGFLAR…WINKINCVAA (114 aa)) enclose the PH domain. The stretch at 911 to 941 (ATTTKLSQEEQLKSHESKLKQITTELAEHRS) forms a coiled coil. Positions 984–1037 (LLTTDGNEPVGLKKSHSSPSLNPDASPVTAKVKRNVSERKDHRPETPGIKQKVT) are disordered. Serine 998, serine 1000, serine 1001, serine 1003, and serine 1009 each carry phosphoserine. Basic and acidic residues predominate over residues 1018–1028 (NVSERKDHRPE).

Ubiquitously expressed, with highest levels in liver. Present in brain, with highest levels in olfactory bulb, cortex, hippocampal pyramidal cell layer and cerebellar granule cell layer (at protein level).

Its subcellular location is the cell membrane. The protein resides in the cell projection. It localises to the ruffle membrane. The protein localises to the postsynaptic density. Guanine nucleotide exchange factor for ARF6. The protein is PH and SEC7 domain-containing protein 3 (Psd3) of Mus musculus (Mouse).